A 647-amino-acid polypeptide reads, in one-letter code: Macrolide export ATP-binding/permease protein MacB (647 aa).

Residues 5 to 243 (LELKGIERSY…TQTPSLTSKI (239 aa)) enclose the ABC transporter domain. 41 to 48 (GASGSGKS) contributes to the ATP binding site. 4 consecutive transmembrane segments (helical) span residues 272–292 (LLTM…LVIG), 522–542 (LFLT…VMNI), 576–596 (ILVC…IAFI), and 610–630 (PIAL…FGFL).

The protein belongs to the ABC transporter superfamily. Macrolide exporter (TC 3.A.1.122) family. Homodimer. Part of the tripartite efflux system MacAB-TolC, which is composed of an inner membrane transporter, MacB, a periplasmic membrane fusion protein, MacA, and an outer membrane component, TolC. The complex forms a large protein conduit and can translocate molecules across both the inner and outer membranes. Interacts with MacA.

The protein localises to the cell inner membrane. Part of the tripartite efflux system MacAB-TolC. MacB is a non-canonical ABC transporter that contains transmembrane domains (TMD), which form a pore in the inner membrane, and an ATP-binding domain (NBD), which is responsible for energy generation. Confers resistance against macrolides. The chain is Macrolide export ATP-binding/permease protein MacB from Photorhabdus laumondii subsp. laumondii (strain DSM 15139 / CIP 105565 / TT01) (Photorhabdus luminescens subsp. laumondii).